The sequence spans 116 residues: uncharacterized protein (116 aa).

This is an uncharacterized protein from Schizosaccharomyces pombe (strain 972 / ATCC 24843) (Fission yeast).